Reading from the N-terminus, the 294-residue chain is Nucleotide-binding protein CPF_0343 (294 aa).

8–15 lines the ATP pocket; the sequence is GLSGAGKT. Residue 59–62 coordinates GTP; the sequence is DIRG.

The protein belongs to the RapZ-like family.

Displays ATPase and GTPase activities. This is Nucleotide-binding protein CPF_0343 from Clostridium perfringens (strain ATCC 13124 / DSM 756 / JCM 1290 / NCIMB 6125 / NCTC 8237 / Type A).